The chain runs to 228 residues: E3 ubiquitin-protein ligase RNF114 (228 aa).

The segment at 29–68 (CPVCLEVYEKPVQVPCGHVFCSACLQECLKPKKPVCGVCR) adopts an RING-type zinc-finger fold. Residues Cys91 and Cys94 each contribute to the Zn(2+) site. The C2HC RNF-type zinc finger occupies 91–110 (CHGCRKNFFLSKIRSHVATC). Lys102 carries the N6-acetyllysine modification. Residues His106 and Cys110 each coordinate Zn(2+). The residue at position 112 (Lys112) is an N6-acetyllysine.

As to quaternary structure, interacts with XAF1, the interaction increases XAF1 stability and proapoptotic effects, and may regulate IFN signaling. Post-translationally, autoubiquitinated. Polyubiquitinated in the presence of E2 enzymes UBE2D1, UBE2D2 and UBE2D3, but only monoubiquitinated in the presence of UBE2E1. As to expression, expressed in numerous tissues, including skin, CD4 lymphocytes and dendritic cells. Highest levels in testis.

It is found in the cytoplasm. Its subcellular location is the nucleus. It catalyses the reaction S-ubiquitinyl-[E2 ubiquitin-conjugating enzyme]-L-cysteine + [acceptor protein]-L-lysine = [E2 ubiquitin-conjugating enzyme]-L-cysteine + N(6)-ubiquitinyl-[acceptor protein]-L-lysine.. It participates in protein modification; protein ubiquitination. In terms of biological role, E3 ubiquitin-protein ligase that promotes the ubiquitination of various substrates. In turn, participates in the regulation of many biological processes including cell cycle, apoptosis, osteoclastogenesis as well as innate or adaptive immunity. Acts as a negative regulator of NF-kappa-B-dependent transcription by promoting the ubiquitination and stabilization of the NF-kappa-B inhibitor TNFAIP3. May promote the ubiquitination of TRAF6 as well. Also acts as a negative regulator of T-cell activation. Inhibits cellular dsRNA responses and interferon production by targeting MAVS component for proteasomal degradation. Ubiquitinates the CDK inhibitor CDKN1A leading to its degradationand probably also CDKN1B and CDKN1C. This activity stimulates cell cycle G1-to-S phase transition and suppresses cellular senescence. May play a role in spermatogenesis. The protein is E3 ubiquitin-protein ligase RNF114 (RNF114) of Homo sapiens (Human).